Reading from the N-terminus, the 247-residue chain is tRNA pseudouridine synthase A 1 (247 aa).

The active-site Nucleophile is the Asp-53. Position 111 (Tyr-111) interacts with substrate.

It belongs to the tRNA pseudouridine synthase TruA family. As to quaternary structure, homodimer.

The catalysed reaction is uridine(38/39/40) in tRNA = pseudouridine(38/39/40) in tRNA. In terms of biological role, formation of pseudouridine at positions 38, 39 and 40 in the anticodon stem and loop of transfer RNAs. This is tRNA pseudouridine synthase A 1 from Bacillus cereus (strain ATCC 14579 / DSM 31 / CCUG 7414 / JCM 2152 / NBRC 15305 / NCIMB 9373 / NCTC 2599 / NRRL B-3711).